The sequence spans 198 residues: Probable GTP-binding protein EngB (198 aa).

The 172-residue stretch at 27 to 198 folds into the EngB-type G domain; that stretch reads DLPEVALAGR…ESWDTILSEL (172 aa). GTP contacts are provided by residues 35 to 42, 62 to 66, 80 to 83, 147 to 150, and 179 to 181; these read GRSNVGKS, GKTQL, DVPG, TKAD, and FSS. The Mg(2+) site is built by Ser-42 and Thr-64.

Belongs to the TRAFAC class TrmE-Era-EngA-EngB-Septin-like GTPase superfamily. EngB GTPase family. Mg(2+) is required as a cofactor.

In terms of biological role, necessary for normal cell division and for the maintenance of normal septation. The protein is Probable GTP-binding protein EngB of Streptococcus agalactiae serotype Ia (strain ATCC 27591 / A909 / CDC SS700).